A 288-amino-acid polypeptide reads, in one-letter code: Bifunctional protein FolD 2 (288 aa).

NADP(+)-binding positions include 166–168 (GRS) and Ser-191.

The protein belongs to the tetrahydrofolate dehydrogenase/cyclohydrolase family. As to quaternary structure, homodimer.

The enzyme catalyses (6R)-5,10-methylene-5,6,7,8-tetrahydrofolate + NADP(+) = (6R)-5,10-methenyltetrahydrofolate + NADPH. It catalyses the reaction (6R)-5,10-methenyltetrahydrofolate + H2O = (6R)-10-formyltetrahydrofolate + H(+). Its pathway is one-carbon metabolism; tetrahydrofolate interconversion. Functionally, catalyzes the oxidation of 5,10-methylenetetrahydrofolate to 5,10-methenyltetrahydrofolate and then the hydrolysis of 5,10-methenyltetrahydrofolate to 10-formyltetrahydrofolate. This Frankia alni (strain DSM 45986 / CECT 9034 / ACN14a) protein is Bifunctional protein FolD 2.